The following is a 214-amino-acid chain: A-type ATP synthase subunit D (214 aa).

It belongs to the V-ATPase D subunit family. As to quaternary structure, has multiple subunits with at least A(3), B(3), C, D, E, F, H, I and proteolipid K(x).

Its subcellular location is the cell membrane. Functionally, component of the A-type ATP synthase that produces ATP from ADP in the presence of a proton gradient across the membrane. The protein is A-type ATP synthase subunit D of Thermococcus sibiricus (strain DSM 12597 / MM 739).